The primary structure comprises 334 residues: Mediator of RNA polymerase II transcription subunit 4 (334 aa).

Residues glutamine 71–serine 100 adopt a coiled-coil conformation. Residues proline 193–lysine 334 are disordered. 2 stretches are compositionally biased toward polar residues: residues leucine 194–glycine 206 and asparagine 251–asparagine 282.

This sequence belongs to the Mediator complex subunit 4 family. As to quaternary structure, component of the Mediator complex.

Its subcellular location is the nucleus. Its function is as follows. Component of the Mediator complex, a coactivator involved in the regulated transcription of nearly all RNA polymerase II-dependent genes. Mediator functions as a bridge to convey information from gene-specific regulatory proteins to the basal RNA polymerase II transcription machinery. Mediator is recruited to promoters by direct interactions with regulatory proteins and serves as a scaffold for the assembly of a functional preinitiation complex with RNA polymerase II and the general transcription factors. This is Mediator of RNA polymerase II transcription subunit 4 (mdt-4) from Caenorhabditis elegans.